A 231-amino-acid polypeptide reads, in one-letter code: CD302 antigen (231 aa).

The signal sequence occupies residues 1–21; the sequence is MSAAVVATLPTLLLLLGLAAA. Residues 22–169 are Extracellular-facing; sequence DCPSSSWVQF…YEKKYLPDHH (148 aa). The region spanning 31 to 153 is the C-type lectin domain; the sequence is FQSNCYIFLQ…CEVSSVEGAL (123 aa). A glycan (N-linked (GlcNAc...) asparagine) is linked at asparagine 110. A disulfide bond links cysteine 129 and cysteine 144. A helical transmembrane segment spans residues 170–190; that stretch reads ILITALVIASTTILTITGAVV. The Cytoplasmic portion of the chain corresponds to 191-231; that stretch reads WFLYKRNLTSGLTNTAYTTAPQLPYNDDCILVDAEENEYVA.

It localises to the membrane. The protein resides in the cell projection. It is found in the filopodium. Its subcellular location is the cytoplasm. The protein localises to the cell cortex. It localises to the microvillus. Its function is as follows. Potential multifunctional C-type lectin receptor that may play roles in endocytosis and phagocytosis as well as in cell adhesion and migration. The sequence is that of CD302 antigen from Trichosurus vulpecula (Brush-tailed possum).